Here is a 37-residue protein sequence, read N- to C-terminus: Photosystem II reaction center protein M (37 aa).

Residues 7–27 (AFIAVLLFLAVPTAFLLIPYV) form a helical membrane-spanning segment.

The protein belongs to the PsbM family. PSII is composed of 1 copy each of membrane proteins PsbA, PsbB, PsbC, PsbD, PsbE, PsbF, PsbH, PsbI, PsbJ, PsbK, PsbL, PsbM, PsbT, PsbX, PsbY, PsbZ, Psb30/Ycf12, at least 3 peripheral proteins of the oxygen-evolving complex and a large number of cofactors. It forms dimeric complexes.

The protein localises to the plastid. Its subcellular location is the chloroplast thylakoid membrane. Functionally, one of the components of the core complex of photosystem II (PSII). PSII is a light-driven water:plastoquinone oxidoreductase that uses light energy to abstract electrons from H(2)O, generating O(2) and a proton gradient subsequently used for ATP formation. It consists of a core antenna complex that captures photons, and an electron transfer chain that converts photonic excitation into a charge separation. This subunit is found at the monomer-monomer interface. This chain is Photosystem II reaction center protein M, found in Pinus thunbergii (Japanese black pine).